A 201-amino-acid polypeptide reads, in one-letter code: Probable chemoreceptor glutamine deamidase CheD (201 aa).

Belongs to the CheD family.

It catalyses the reaction L-glutaminyl-[protein] + H2O = L-glutamyl-[protein] + NH4(+). Probably deamidates glutamine residues to glutamate on methyl-accepting chemotaxis receptors (MCPs), playing an important role in chemotaxis. This Chlorobium luteolum (strain DSM 273 / BCRC 81028 / 2530) (Pelodictyon luteolum) protein is Probable chemoreceptor glutamine deamidase CheD.